We begin with the raw amino-acid sequence, 355 residues long: Phospho-N-acetylmuramoyl-pentapeptide-transferase (355 aa).

The next 10 helical transmembrane spans lie at 14-34 (PTGTHLLILLTGLLFLLVVFF), 40-60 (LLIPLMATTLISAGLGCQVVP), 84-104 (GTPTMGGSFFVPVALIFALIW), 107-127 (FTPNVVAVALLTFVYMGIGWL), 147-167 (LILQITGAVLFCLWMLVNQVS), 176-196 (LVIPLGFFFWILAGFVLVAES), 205-225 (VDGLAGGTGAIAFLGLGIIIA), 227-247 (SHPDLAIFCTCFAGACLGFIF), 268-290 (ALAAVGLIAGHLWGLFLISGLFF), and 334-354 (TKIVGAFYLVNALLVVLAIWS).

This sequence belongs to the glycosyltransferase 4 family. MraY subfamily. The cofactor is Mg(2+).

The protein localises to the cell inner membrane. It catalyses the reaction UDP-N-acetyl-alpha-D-muramoyl-L-alanyl-gamma-D-glutamyl-meso-2,6-diaminopimeloyl-D-alanyl-D-alanine + di-trans,octa-cis-undecaprenyl phosphate = di-trans,octa-cis-undecaprenyl diphospho-N-acetyl-alpha-D-muramoyl-L-alanyl-D-glutamyl-meso-2,6-diaminopimeloyl-D-alanyl-D-alanine + UMP. Its pathway is cell wall biogenesis; peptidoglycan biosynthesis. Functionally, catalyzes the initial step of the lipid cycle reactions in the biosynthesis of the cell wall peptidoglycan: transfers peptidoglycan precursor phospho-MurNAc-pentapeptide from UDP-MurNAc-pentapeptide onto the lipid carrier undecaprenyl phosphate, yielding undecaprenyl-pyrophosphoryl-MurNAc-pentapeptide, known as lipid I. The polypeptide is Phospho-N-acetylmuramoyl-pentapeptide-transferase (Microcystis aeruginosa (strain NIES-843 / IAM M-2473)).